The sequence spans 486 residues: Glutamyl-tRNA(Gln) amidotransferase subunit A (486 aa).

Active-site charge relay system residues include Lys-74 and Ser-149. The active-site Acyl-ester intermediate is Ser-173.

This sequence belongs to the amidase family. GatA subfamily. In terms of assembly, heterotrimer of A, B and C subunits.

The enzyme catalyses L-glutamyl-tRNA(Gln) + L-glutamine + ATP + H2O = L-glutaminyl-tRNA(Gln) + L-glutamate + ADP + phosphate + H(+). In terms of biological role, allows the formation of correctly charged Gln-tRNA(Gln) through the transamidation of misacylated Glu-tRNA(Gln) in organisms which lack glutaminyl-tRNA synthetase. The reaction takes place in the presence of glutamine and ATP through an activated gamma-phospho-Glu-tRNA(Gln). In Prochlorococcus marinus (strain MIT 9313), this protein is Glutamyl-tRNA(Gln) amidotransferase subunit A.